The following is a 400-amino-acid chain: Acetate kinase (400 aa).

Asparagine 10 provides a ligand contact to Mg(2+). Lysine 17 contacts ATP. Arginine 91 lines the substrate pocket. Aspartate 150 serves as the catalytic Proton donor/acceptor. Residues histidine 210 to glycine 214, aspartate 285 to arginine 287, and glycine 333 to asparagine 337 contribute to the ATP site. Residue glutamate 387 coordinates Mg(2+).

It belongs to the acetokinase family. As to quaternary structure, homodimer. Requires Mg(2+) as cofactor. Mn(2+) is required as a cofactor.

It localises to the cytoplasm. It catalyses the reaction acetate + ATP = acetyl phosphate + ADP. The protein operates within metabolic intermediate biosynthesis; acetyl-CoA biosynthesis; acetyl-CoA from acetate: step 1/2. In terms of biological role, catalyzes the formation of acetyl phosphate from acetate and ATP. Can also catalyze the reverse reaction. The chain is Acetate kinase from Buchnera aphidicola subsp. Baizongia pistaciae (strain Bp).